Consider the following 168-residue polypeptide: Putative F-box protein At1g30945 (168 aa).

Residues 5–52 enclose the F-box domain; sequence KTFDSISNDLFLEILLRLSTKSIDRSRCVSKQWASILCSQDFTESEKF.

This is Putative F-box protein At1g30945 from Arabidopsis thaliana (Mouse-ear cress).